The primary structure comprises 763 residues: Phosphoglycerol transferase I (763 aa).

The next 4 helical transmembrane spans lie at 4–19 (LLSF…IYAW), 26–48 (WWFA…LFAS), 76–98 (YILP…GWIL), and 105–127 (PHHF…ASPA).

Belongs to the OpgB family.

It localises to the cell inner membrane. It carries out the reaction a phosphatidylglycerol + a membrane-derived-oligosaccharide D-glucose = a 1,2-diacyl-sn-glycerol + a membrane-derived-oligosaccharide 6-(glycerophospho)-D-glucose.. The protein operates within glycan metabolism; osmoregulated periplasmic glucan (OPG) biosynthesis. Transfers a phosphoglycerol residue from phosphatidylglycerol to the membrane-bound nascent glucan backbones. In Escherichia coli O6:H1 (strain CFT073 / ATCC 700928 / UPEC), this protein is Phosphoglycerol transferase I.